Consider the following 417-residue polypeptide: Probable histone-binding protein lin-53 (417 aa).

WD repeat units follow at residues Asn118–Arg158, Gly170–Gly210, Gly220–Cys260, Ala263–His303, Ser307–Ser347, and Gly364–Val404.

The protein belongs to the WD repeat RBAP46/RBAP48/MSI1 family. In terms of assembly, binds directly to helix 1 of the histone fold of histone H4, a region that is not accessible when H4 is in chromatin. Probable component of a NuRD-like complex, composed of at least lin-53 and hda-1. Interacts with lin-35. Interacts with hda-1; the interaction is direct. Component of the DRM complex, at least composed of lin-9, lin-35, lin-37, lin-52, lin-53, lin-54- dpl-1 and efl-1. Interacts with hcp-3.

It is found in the nucleus. The protein localises to the chromosome. Its subcellular location is the centromere. Its function is as follows. Core histone-binding subunit that may target chromatin assembly factors, chromatin remodeling factors and histone deacetylases to their histone substrates in a manner that is regulated by nucleosomal DNA. Required for hcp-3 and his-1 stabilization, localization of hcp-3 to centromeres and for proper chromosome segregation. Synthetic multivulva class B (synMuvB) protein. SynMuvB proteins are required to repress the induction of vulval development by Ras signaling and probably act by forming the multiprotein DRM complex that represses transcription. This Caenorhabditis elegans protein is Probable histone-binding protein lin-53.